The primary structure comprises 238 residues: Ion-translocating oxidoreductase complex subunit E (238 aa).

The next 5 helical transmembrane spans lie at 41–61, 71–91, 95–115, 130–150, and 184–204; these read LGLG…VSLV, LPAF…LMQA, ELYQ…VILG, SFDG…LGGL, and GFLL…LIAL.

Belongs to the NqrDE/RnfAE family. As to quaternary structure, the complex is composed of six subunits: RnfA, RnfB, RnfC, RnfD, RnfE and RnfG.

It localises to the cell inner membrane. Functionally, part of a membrane-bound complex that couples electron transfer with translocation of ions across the membrane. The polypeptide is Ion-translocating oxidoreductase complex subunit E (Pseudomonas aeruginosa (strain UCBPP-PA14)).